An 85-amino-acid chain; its full sequence is U1-ctenitoxin-Pn1a (85 aa).

The first 16 residues, 1–16 (MKVAIVFLSLLVLAFA), serve as a signal peptide directing secretion. The propeptide occupies 17-34 (SESIEENREEFPVEESAR). Intrachain disulfides connect Cys35-Cys49, Cys42-Cys55, Cys46-Cys81, Cys48-Cys65, and Cys57-Cys63. The propeptide occupies 82–85 (QNKI).

Belongs to the neurotoxin 03 (Tx2) family. 05 subfamily. Expressed by the venom gland.

It localises to the secreted. Functionally, insecticidal neurotoxin that reversibly inhibits the N-methyl-D-aspartate (NMDA)-subtype of ionotropic glutamate receptor (GRIN) and inhibits inactivation of insect sodium channels (Nav). In vivo, is highly toxic to insects. This Phoneutria nigriventer (Brazilian armed spider) protein is U1-ctenitoxin-Pn1a.